The primary structure comprises 335 residues: Glycerol-3-phosphate dehydrogenase [NAD(P)+] (335 aa).

NADPH is bound by residues Ser-12, Trp-13, and Lys-107. Sn-glycerol 3-phosphate-binding residues include Lys-107, Gly-138, and Ser-140. Ala-142 contributes to the NADPH binding site. Residues Lys-193, Asp-246, Ser-256, Arg-257, and Asn-258 each contribute to the sn-glycerol 3-phosphate site. Lys-193 functions as the Proton acceptor in the catalytic mechanism. Residue Arg-257 participates in NADPH binding. NADPH-binding residues include Val-281 and Glu-283.

The protein belongs to the NAD-dependent glycerol-3-phosphate dehydrogenase family.

The protein resides in the cytoplasm. It carries out the reaction sn-glycerol 3-phosphate + NAD(+) = dihydroxyacetone phosphate + NADH + H(+). The catalysed reaction is sn-glycerol 3-phosphate + NADP(+) = dihydroxyacetone phosphate + NADPH + H(+). It participates in membrane lipid metabolism; glycerophospholipid metabolism. Its function is as follows. Catalyzes the reduction of the glycolytic intermediate dihydroxyacetone phosphate (DHAP) to sn-glycerol 3-phosphate (G3P), the key precursor for phospholipid synthesis. The sequence is that of Glycerol-3-phosphate dehydrogenase [NAD(P)+] from Geobacter sp. (strain M21).